A 488-amino-acid chain; its full sequence is Beta-1,3-glucan-binding protein (488 aa).

A signal peptide spans 1–17 (MFVTFICFLACLTCSYG). A binds to curdlan, laminarihexaose and laminarin. The complex formation with laminarin induces self-association of the complexes into a macro structure, likely containing six protein and three laminarin molecules. The macro structures may form a platform on a microbial surface for recruitment of downstream proteases, as a means of amplification of the initial signal of pathogen recognition for the activation of the phenoloxidase cascade region spans residues 18-135 (QPRAQQYVVP…GTPADTSLEP (118 aa)). A binds to curdlan, lipopolysaccharide and lipoteichoic acid, activates the phenoloxidase cascade and is resistant to proteolytic degradation by trypsin or chymotrypsin, but is not as effective as the full-length protein in aggregation of microorganisms region spans residues 18–198 (QPRAQQYVVP…LKDLANWEAE (181 aa)). The CBM39 domain occupies 24 to 123 (YVVPSAKLEA…GEWTVTEFVN (100 aa)). The binds to laminarihexaose and laminarin stretch occupies residues 24 to 127 (YVVPSAKLEA…VTEFVNEDGT (104 aa)). Residues Asp-72, 99 to 101 (WTY), and Arg-110 contribute to the substrate site. The interval 125-158 (DGTPADTSLEPTTAPTPVRPDQPNQPIPTHRPDP) is disordered. Positions 129 to 139 (ADTSLEPTTAP) are enriched in polar residues. The span at 141-150 (PVRPDQPNQP) shows a compositional bias: pro residues. In terms of domain architecture, GH16 spans 144 to 488 (PDQPNQPIPT…KVDYVRVYAL (345 aa)). A binds to laminarin, but not to curdlan, does not activate the phenoloxidase cascade, is susceptible to proteinase digestion by trypsin or chymotrypsin and does not cause aggregation of microorganisms region spans residues 199–488 (VKFPEEPDYP…KVDYVRVYAL (290 aa)). N-linked (GlcNAc...) asparagine glycans are attached at residues Asn-373 and Asn-453.

Belongs to the insect beta-1,3-glucan binding protein family. In terms of assembly, monomer. In terms of processing, the N-terminus is blocked. Fat body and hemolymph.

Its subcellular location is the secreted. Involved in the recognition of invading microorganisms causing their aggregation. Activates the phenoloxidase cascade. Binds specifically to beta-1,3-glucan. Binds to curdlan, a linear water-insoluble beta-1,3-glucan polysaccharide, and to laminarin, a water-soluble beta-1,3-glucan polysaccharide containing beta-1,6 branches. Also binds to lipopolysaccharide and lipoteichoic acid. The chain is Beta-1,3-glucan-binding protein from Plodia interpunctella (Indianmeal moth).